A 355-amino-acid polypeptide reads, in one-letter code: DNA polymerase IV (355 aa).

The 182-residue stretch at 7–188 (IIHIDMDCFY…LPVRKLFGVG (182 aa)) folds into the UmuC domain. Mg(2+) contacts are provided by Asp-11 and Asp-106. Residue Glu-107 is part of the active site.

It belongs to the DNA polymerase type-Y family. As to quaternary structure, monomer. Requires Mg(2+) as cofactor.

Its subcellular location is the cytoplasm. It catalyses the reaction DNA(n) + a 2'-deoxyribonucleoside 5'-triphosphate = DNA(n+1) + diphosphate. Its function is as follows. Poorly processive, error-prone DNA polymerase involved in untargeted mutagenesis. Copies undamaged DNA at stalled replication forks, which arise in vivo from mismatched or misaligned primer ends. These misaligned primers can be extended by PolIV. Exhibits no 3'-5' exonuclease (proofreading) activity. May be involved in translesional synthesis, in conjunction with the beta clamp from PolIII. The polypeptide is DNA polymerase IV (Legionella pneumophila (strain Lens)).